Reading from the N-terminus, the 59-residue chain is Large ribosomal subunit protein bL32c (59 aa).

Belongs to the bacterial ribosomal protein bL32 family.

The protein resides in the plastid. It is found in the chloroplast. The sequence is that of Large ribosomal subunit protein bL32c from Physcomitrium patens (Spreading-leaved earth moss).